Reading from the N-terminus, the 78-residue chain is Acyl carrier protein (78 aa).

Residues 2 to 77 enclose the Carrier domain; sequence STIEERVKKI…AAIDYVKAHQ (76 aa). The residue at position 37 (Ser37) is an O-(pantetheine 4'-phosphoryl)serine.

It belongs to the acyl carrier protein (ACP) family. 4'-phosphopantetheine is transferred from CoA to a specific serine of apo-ACP by AcpS. This modification is essential for activity because fatty acids are bound in thioester linkage to the sulfhydryl of the prosthetic group.

It localises to the cytoplasm. It functions in the pathway lipid metabolism; fatty acid biosynthesis. In terms of biological role, carrier of the growing fatty acid chain in fatty acid biosynthesis. This is Acyl carrier protein from Pseudomonas putida (strain ATCC 47054 / DSM 6125 / CFBP 8728 / NCIMB 11950 / KT2440).